The sequence spans 498 residues: Sugar transport protein 2 (498 aa).

Residues 1–22 (MAVGSMNVEEGTKAFPAKLTGQ) lie on the Cytoplasmic side of the membrane. 12 consecutive transmembrane segments (helical) span residues 23 to 43 (VFLC…DIGI), 80 to 100 (LLQL…FISS), 117 to 137 (IFFL…MLIG), 140 to 160 (ILLG…ISEI), 167 to 187 (GGLN…ASYV), 200 to 220 (YSLG…FFIH), 288 to 308 (LQFF…PVLF), 320 to 340 (ISTV…LLVV), 348 to 368 (LLME…GILL), 381 to 401 (AVPL…AWSW), 421 to 441 (GYFC…QFFL), and 450 to 470 (LLFF…VFFL). The Cytoplasmic segment spans residues 471–498 (PETKGVPIEEMAEKRWKTHPRWKKYFKD).

The protein belongs to the major facilitator superfamily. Sugar transporter (TC 2.A.1.1) family. In terms of tissue distribution, pollen specific (at protein level).

The protein localises to the membrane. In terms of biological role, mediates an active uptake of hexoses, probably by sugar/hydrogen symport. Can transport glucose, 3-O-methylglucose, xylose, mannose, fructose and galactose. The protein is Sugar transport protein 2 (STP2) of Arabidopsis thaliana (Mouse-ear cress).